Here is an 879-residue protein sequence, read N- to C-terminus: uncharacterized protein (879 aa).

The helical transmembrane segment at Leu14 to Thr34 threads the bilayer.

The protein localises to the membrane. This is an uncharacterized protein from Mycoplasma pneumoniae (strain ATCC 29342 / M129 / Subtype 1) (Mycoplasmoides pneumoniae).